Here is a 126-residue protein sequence, read N- to C-terminus: DNA-directed RNA polymerase subunit omega (126 aa).

This sequence belongs to the RNA polymerase subunit omega family. In terms of assembly, the RNAP catalytic core consists of 2 alpha, 1 beta, 1 beta' and 1 omega subunit. When a sigma factor is associated with the core the holoenzyme is formed, which can initiate transcription.

The enzyme catalyses RNA(n) + a ribonucleoside 5'-triphosphate = RNA(n+1) + diphosphate. Promotes RNA polymerase assembly. Latches the N- and C-terminal regions of the beta' subunit thereby facilitating its interaction with the beta and alpha subunits. This chain is DNA-directed RNA polymerase subunit omega, found in Paramagnetospirillum magneticum (strain ATCC 700264 / AMB-1) (Magnetospirillum magneticum).